The following is a 65-amino-acid chain: DNA-directed RNA polymerase subunit Rpo10 (65 aa).

Zn(2+) contacts are provided by Cys7, Cys10, Cys44, and Cys45.

It belongs to the archaeal Rpo10/eukaryotic RPB10 RNA polymerase subunit family. Part of the RNA polymerase complex. It depends on Zn(2+) as a cofactor.

The protein resides in the cytoplasm. It carries out the reaction RNA(n) + a ribonucleoside 5'-triphosphate = RNA(n+1) + diphosphate. Its function is as follows. DNA-dependent RNA polymerase (RNAP) catalyzes the transcription of DNA into RNA using the four ribonucleoside triphosphates as substrates. This Pyrobaculum arsenaticum (strain DSM 13514 / JCM 11321 / PZ6) protein is DNA-directed RNA polymerase subunit Rpo10.